Here is a 127-residue protein sequence, read N- to C-terminus: Fatty acid-binding protein, liver (127 aa).

Met-1 carries the post-translational modification N-acetylmethionine. Ser-11 is subject to Phosphoserine. An N6-succinyllysine mark is found at Lys-31 and Lys-36. Ser-39 carries the post-translational modification Phosphoserine. At Lys-46 the chain carries N6-succinyllysine. Thr-51 carries the phosphothreonine modification. Residues Lys-57 and Lys-78 each carry the N6-succinyllysine modification. Position 84 is an N6-acetyllysine; alternate (Lys-84). N6-succinyllysine; alternate is present on Lys-84. Lys-90 bears the N6-succinyllysine mark. The residue at position 100 (Ser-100) is a Phosphoserine. Lys-121 is subject to N6-succinyllysine.

This sequence belongs to the calycin superfamily. Fatty-acid binding protein (FABP) family.

Its subcellular location is the cytoplasm. Plays a role in lipoprotein-mediated cholesterol uptake in hepatocytes. Binds cholesterol. Binds free fatty acids and their coenzyme A derivatives, bilirubin, and some other small molecules in the cytoplasm. May be involved in intracellular lipid transport. The polypeptide is Fatty acid-binding protein, liver (Fabp1) (Mus musculus (Mouse)).